The chain runs to 217 residues: MARKGILGTKLGMTQVFDENNKVVPVTVVKAGPNVVTRIRTPERDGYSAVQIAYGEISPRKVNKPVTGQFAAAGVNPRRHLAELRLDDESAAADYEVGQELTAEVFSDGAYVDVTGTSKGKGFAGTMKRHGFKGQGAAHGAQAVHRRPGSIGGCATPGRVFKGTRMSGRMGSDRVTTQNLVVHKVDAANGVLLIKGAIPGRNGGLVMVRSAIKRGEK.

The protein belongs to the universal ribosomal protein uL3 family. In terms of assembly, part of the 50S ribosomal subunit. Forms a cluster with proteins L14 and L19.

One of the primary rRNA binding proteins, it binds directly near the 3'-end of the 23S rRNA, where it nucleates assembly of the 50S subunit. The polypeptide is Large ribosomal subunit protein uL3 (Mycobacterium sp. (strain KMS)).